The primary structure comprises 484 residues: DNA-binding protein (484 aa).

Positions 1-69 (MASNQHSQRE…ESAEEEEAEP (69 aa)) are disordered. Positions 51–60 (SMAAIPLSPE) are enriched in low complexity. The residue at position 150 (tyrosine 150) is a Phosphotyrosine; by host. Positions 239 and 241 each coordinate Zn(2+). The interval 252 to 286 (VEMDVTSESGQRALKENPSKAKVAQNRWGRNVVQI) is flexible loop. 6 residues coordinate Zn(2+): cysteine 294, cysteine 310, cysteine 351, cysteine 353, cysteine 405, and cysteine 421. The tract at residues 468 to 484 (ISLPTNHGDCREEPFDF) is C-terminal arm, DBP binding.

Belongs to the adenoviridae E2A DNA-binding protein family. In terms of assembly, homomultimerizes on viral ssDNA bound to pTP. Forms a initiation complex with viral polymerase, pTP and hosts NFIA and POU2F1/OCT1. Interacts with host SRCAP.

Its subcellular location is the host nucleus. Plays a role in the elongation phase of viral strand displacement replication by unwinding the template in an ATP-independent fashion, employing its capacity to form multimers. Also enhances the rate of initiation. Released from template upon second strand synthesis. Assembles in complex with viral pTP, viral pol, host NFIA and host POU2F1/OCT1 on viral origin of replication. Covers the whole ssDNA genome during synthesis. The complementary strand synthesis induces its relese from DNA template. May inhibit cellular transcription mediated by the interaction between host SRCAP and CBP. The chain is DNA-binding protein from Human adenovirus A serotype 12 (HAdV-12).